Here is a 161-residue protein sequence, read N- to C-terminus: 2-C-methyl-D-erythritol 2,4-cyclodiphosphate synthase (161 aa).

A divalent metal cation-binding residues include aspartate 9 and histidine 11. 4-CDP-2-C-methyl-D-erythritol 2-phosphate contacts are provided by residues 9-11 (DFH) and 37-38 (HS). Residue histidine 45 participates in a divalent metal cation binding. 4-CDP-2-C-methyl-D-erythritol 2-phosphate contacts are provided by residues 59–61 (DIG), 64–68 (FPDTD), 135–138 (TTTE), and arginine 145.

This sequence belongs to the IspF family. Homotrimer. It depends on a divalent metal cation as a cofactor.

It catalyses the reaction 4-CDP-2-C-methyl-D-erythritol 2-phosphate = 2-C-methyl-D-erythritol 2,4-cyclic diphosphate + CMP. It participates in isoprenoid biosynthesis; isopentenyl diphosphate biosynthesis via DXP pathway; isopentenyl diphosphate from 1-deoxy-D-xylulose 5-phosphate: step 4/6. In terms of biological role, involved in the biosynthesis of isopentenyl diphosphate (IPP) and dimethylallyl diphosphate (DMAPP), two major building blocks of isoprenoid compounds. Catalyzes the conversion of 4-diphosphocytidyl-2-C-methyl-D-erythritol 2-phosphate (CDP-ME2P) to 2-C-methyl-D-erythritol 2,4-cyclodiphosphate (ME-CPP) with a corresponding release of cytidine 5-monophosphate (CMP). The sequence is that of 2-C-methyl-D-erythritol 2,4-cyclodiphosphate synthase from Leptospira borgpetersenii serovar Hardjo-bovis (strain JB197).